The following is a 471-amino-acid chain: Tryptophanase (471 aa).

K5, K115, and K156 each carry N6-acetyllysine. Residue K270 is modified to N6-(pyridoxal phosphate)lysine. The residue at position 450 (K450) is an N6-acetyllysine.

This sequence belongs to the beta-eliminating lyase family. Homotetramer. The cofactor is pyridoxal 5'-phosphate.

It carries out the reaction L-tryptophan + H2O = indole + pyruvate + NH4(+). It functions in the pathway amino-acid degradation; L-tryptophan degradation via pyruvate pathway; indole and pyruvate from L-tryptophan: step 1/1. In Escherichia coli (strain SMS-3-5 / SECEC), this protein is Tryptophanase.